A 568-amino-acid polypeptide reads, in one-letter code: Urease subunit alpha (568 aa).

The region spanning G133–L568 is the Urease domain. Ni(2+) contacts are provided by H138, H140, and K217. K217 carries the N6-carboxylysine modification. H219 provides a ligand contact to substrate. H246 and H272 together coordinate Ni(2+). H320 serves as the catalytic Proton donor. D360 contributes to the Ni(2+) binding site.

It belongs to the metallo-dependent hydrolases superfamily. Urease alpha subunit family. In terms of assembly, heterotrimer of UreA (gamma), UreB (beta) and UreC (alpha) subunits. Three heterotrimers associate to form the active enzyme. It depends on Ni cation as a cofactor. Carboxylation allows a single lysine to coordinate two nickel ions.

It is found in the cytoplasm. It carries out the reaction urea + 2 H2O + H(+) = hydrogencarbonate + 2 NH4(+). It participates in nitrogen metabolism; urea degradation; CO(2) and NH(3) from urea (urease route): step 1/1. This chain is Urease subunit alpha, found in Haloarcula marismortui (strain ATCC 43049 / DSM 3752 / JCM 8966 / VKM B-1809) (Halobacterium marismortui).